The following is a 211-amino-acid chain: Protein Nef (211 aa).

The interval 1 to 38 is disordered; it reads MGNAWSKSKFAGWSEVRDRMRRSSSDPQQPCAPGVGAV. Gly2 carries the N-myristoyl glycine; by host lipid modification. Ser6 carries the phosphoserine; by host modification. Over residues 15-24 the composition is skewed to basic and acidic residues; the sequence is EVRDRMRRSS. Positions 67 to 70 are acidic; interacts with host PACS1 and PACS2; stabilizes the interaction of NEF/MHC-I with host AP1M1; necessary for MHC-I internalization; that stretch reads KDED. The segment at 74-83 is SH3-binding; interaction with Src family tyrosine kinases; the sequence is PVRPQVPLRP. The PxxP; stabilizes the interaction of NEF/MHC-I with host AP1M1; necessary for MHC-I internalization signature appears at 77–80; the sequence is PQVP. The tract at residues 113-129 is mediates dimerization, Nef-PTE1 interaction; it reads EILDLWIYHTQGFFPDW. Residues 153–186 are binding to ATP6V1H; it reads VSAEEAERLGNTNEDASLLHPACNHGAEDAHGEI. The short motif at 170 to 171 is the Dileucine internalization motif; necessary for CD4 internalization element; it reads LL. The Diacidic; necessary for CD4 internalization signature appears at 180 to 181; it reads ED.

This sequence belongs to the lentivirus primate group Nef protein family. In terms of assembly, monomer; cytosolic form. Homodimer; membrane bound form. Interacts with Nef associated p21-activated kinase (PAK2); this interaction activates PAK2. Associates with the Nef-MHC-I-AP1 complex; this complex is required for MHC-I internalization. Interacts (via C-terminus) with host PI3-kinase. Interacts with host PACS1; this interaction seems to be weak. Interacts with host PACS2. Interacts with host LCK and MAPK3; these interactions inhibit the kinase activity of the latter. Interacts with host ATP6V1H; this interaction may play a role in CD4 endocytosis. Associates with the CD4-Nef-AP2 complex; this complex is required for CD4 internalization. Interacts with host AP2 subunit alpha and AP2 subunit sigma2. Interacts with TCR-zeta chain; this interaction up-regulates the Fas ligand (FasL) surface expression. Interacts with host HCK, LYN, and SRC; these interactions activate the Src family kinases. Interacts with MAP3K5; this interaction inhibits the Fas and TNFR-mediated death signals. Interacts with beta-COP and PTE1. Interacts with human RACK1; this increases Nef phosphorylation by PKC. Interacts with TP53; this interaction decreases the half-life of TP53, protecting the infected cell against p53-mediated apoptosis. The virion-associated Nef proteins are cleaved by the viral protease to release the soluble C-terminal core protein. Nef is probably cleaved concomitantly with viral structural proteins on maturation of virus particles. Post-translationally, myristoylated. In terms of processing, phosphorylated on serine residues, probably by host PKCdelta and theta.

Its subcellular location is the host cell membrane. It localises to the virion. It is found in the secreted. The protein resides in the host Golgi apparatus membrane. In terms of biological role, factor of infectivity and pathogenicity, required for optimal virus replication. Alters numerous pathways of T-lymphocyte function and down-regulates immunity surface molecules in order to evade host defense and increase viral infectivity. Alters the functionality of other immunity cells, like dendritic cells, monocytes/macrophages and NK cells. In infected CD4(+) T-lymphocytes, down-regulates the surface MHC-I, mature MHC-II, CD4, CD28, CCR5 and CXCR4 molecules. Mediates internalization and degradation of host CD4 through the interaction of with the cytoplasmic tail of CD4, the recruitment of AP-2 (clathrin adapter protein complex 2), internalization through clathrin coated pits, and subsequent transport to endosomes and lysosomes for degradation. Diverts host MHC-I molecules to the trans-Golgi network-associated endosomal compartments by an endocytic pathway to finally target them for degradation. MHC-I down-regulation may involve AP-1 (clathrin adapter protein complex 1) or possibly Src family kinase-ZAP70/Syk-PI3K cascade recruited by PACS2. In consequence infected cells are masked for immune recognition by cytotoxic T-lymphocytes. Decreasing the number of immune receptors also prevents reinfection by more HIV particles (superinfection). Down-regulates host SERINC3 and SERINC5 thereby excluding these proteins from the viral particles. Virion infectivity is drastically higher when SERINC3 or SERINC5 are excluded from the viral envelope, because these host antiviral proteins impair the membrane fusion event necessary for subsequent virion penetration. Its function is as follows. Bypasses host T-cell signaling by inducing a transcriptional program nearly identical to that of anti-CD3 cell activation. Interaction with TCR-zeta chain up-regulates the Fas ligand (FasL). Increasing surface FasL molecules and decreasing surface MHC-I molecules on infected CD4(+) cells send attacking cytotoxic CD8+ T-lymphocytes into apoptosis. Functionally, plays a role in optimizing the host cell environment for viral replication without causing cell death by apoptosis. Protects the infected cells from apoptosis in order to keep them alive until the next virus generation is ready to strike. Inhibits the Fas and TNFR-mediated death signals by blocking MAP3K5/ASK1. Decreases the half-life of TP53, protecting the infected cell against p53-mediated apoptosis. Inhibits the apoptotic signals regulated by the Bcl-2 family proteins through the formation of a Nef/PI3-kinase/PAK2 complex that leads to activation of PAK2 and induces phosphorylation of host BAD. In terms of biological role, extracellular Nef protein targets CD4(+) T-lymphocytes for apoptosis by interacting with CXCR4 surface receptors. The polypeptide is Protein Nef (Human immunodeficiency virus type 1 group O (isolate MVP5180) (HIV-1)).